A 411-amino-acid chain; its full sequence is Envelope glycoprotein G (411 aa).

A signal peptide spans 1-19 (MLTVLAALSLLSLLTSATG). N-linked (GlcNAc...) asparagine; by host glycans are attached at residues asparagine 83, asparagine 138, asparagine 222, asparagine 245, and asparagine 317. Polar residues-rich tracts occupy residues 306 to 327 (VPSS…SNSP) and 334 to 345 (SVNSDDSTHTGG). Positions 306–345 (VPSSAAESSLENQSTQEESNSPEVAHLRSVNSDDSTHTGG) are disordered. A helical transmembrane segment spans residues 363 to 379 (CLALIGLGTCAMIGLIV). N-linked (GlcNAc...) asparagine; by host glycosylation occurs at asparagine 392.

The protein belongs to the alphaherpesvirinae glycoprotein G family.

The protein resides in the virion membrane. Chemokine-binding protein that inhibits neutrophils' chemotaxis. In Equus caballus (Horse), this protein is Envelope glycoprotein G (gG).